The chain runs to 213 residues: MPEENIFLFVPNLIGYARIVFAIISFYFMPCCPFTASSFYLLSGLLDAFDGHAARALNQGTRFGAMLDMLTDRCATMCLLVNLALLYPRATLLFQLSMSLDVASHWLHLHSSVVRGSESHKMIDLSGNPVLRIYYTSRPALFTLCAGNELFYCLLYLFNFSEGPLVGSVGLFRMGLWVTAPIALLKSVISVIHLITAARNMAALDAADRAKKK.

Over 1 to 5 (MPEEN) the chain is Cytoplasmic. The helical transmembrane segment at 6 to 26 (IFLFVPNLIGYARIVFAIISF) threads the bilayer. Position 27 (Tyr-27) is a topological domain, lumenal. A helical transmembrane segment spans residues 28–48 (FMPCCPFTASSFYLLSGLLDA). Mg(2+)-binding residues include Asp-47 and Asp-50. At 49-73 (FDGHAARALNQGTRFGAMLDMLTDR) the chain is on the cytoplasmic side. Residues Gly-51, Arg-55, and Thr-61 each coordinate a CDP-1,2-diacyl-sn-glycerol. Mg(2+) contacts are provided by Asp-68 and Asp-72. Asp-72 functions as the Proton acceptor in the catalytic mechanism. A helical transmembrane segment spans residues 74 to 94 (CATMCLLVNLALLYPRATLLF). Residue Gln-95 is a topological domain, lumenal. The helical transmembrane segment at 96 to 116 (LSMSLDVASHWLHLHSSVVRG) threads the bilayer. Residues 117 to 139 (SESHKMIDLSGNPVLRIYYTSRP) are Cytoplasmic-facing. A helical membrane pass occupies residues 140 to 160 (ALFTLCAGNELFYCLLYLFNF). The Lumenal portion of the chain corresponds to 161-174 (SEGPLVGSVGLFRM). Residues 175-195 (GLWVTAPIALLKSVISVIHLI) traverse the membrane as a helical segment. Residues 196-213 (TAARNMAALDAADRAKKK) lie on the Cytoplasmic side of the membrane.

The protein belongs to the CDP-alcohol phosphatidyltransferase class-I family. Requires Mn(2+) as cofactor. Mg(2+) serves as cofactor.

The protein localises to the endoplasmic reticulum membrane. Its subcellular location is the cell membrane. It carries out the reaction a CDP-1,2-diacyl-sn-glycerol + myo-inositol = a 1,2-diacyl-sn-glycero-3-phospho-(1D-myo-inositol) + CMP + H(+). Functionally, catalyzes the biosynthesis of phosphatidylinositol (PtdIns) as well as PtdIns:inositol exchange reaction. May thus act to reduce an excessive cellular PtdIns content. The exchange activity is due to the reverse reaction of PtdIns synthase and is dependent on CMP, which is tightly bound to the enzyme. In Mus musculus (Mouse), this protein is CDP-diacylglycerol--inositol 3-phosphatidyltransferase.